The chain runs to 226 residues: PKHD-type hydroxylase PLES_48951 (226 aa).

A Fe2OG dioxygenase domain is found at 78-178 (KVFPPLFNCY…RYASFFWTQS (101 aa)). The Fe cation site is built by histidine 96, aspartate 98, and histidine 159. Position 169 (arginine 169) interacts with 2-oxoglutarate.

Fe(2+) serves as cofactor. L-ascorbate is required as a cofactor.

The protein is PKHD-type hydroxylase PLES_48951 of Pseudomonas aeruginosa (strain LESB58).